A 96-amino-acid chain; its full sequence is Transcription and mRNA export factor SUS1 (96 aa).

A Glycyl lysine isopeptide (Lys-Gly) (interchain with G-Cter in ubiquitin) cross-link involves residue Lys68.

This sequence belongs to the ENY2 family. As to quaternary structure, component of the nuclear pore complex (NPC)-associated TREX-2 complex (transcription and export complex 2), composed of at least SUS1, SAC3, THP1, SEM1, and CDC31. TREX-2 contains 2 SUS1 chains. The TREX-2 complex interacts with the nucleoporin NUP1. Component of the 1.8 MDa SAGA transcription coactivator-HAT complex. SAGA is built of 5 distinct domains with specialized functions. Within the SAGA complex, SUS1, SGF11, SGF73 and UBP8 form an additional subcomplex of SAGA called the DUB module (deubiquitination module). Interacts directly with THP1, SAC3, SGF11, and with the RNA polymerase II.

The protein resides in the nucleus. It is found in the nucleoplasm. It localises to the cytoplasm. Its subcellular location is the P-body. In terms of biological role, involved in mRNA export coupled transcription activation by association with both the TREX-2 and the SAGA complexes. At the promoters, SAGA is required for recruitment of the basal transcription machinery. It influences RNA polymerase II transcriptional activity through different activities such as TBP interaction and promoter selectivity, interaction with transcription activators, and chromatin modification through histone acetylation and deubiquitination. Within the SAGA complex, participates in a subcomplex required for deubiquitination of H2B and for the maintenance of steady-state H3 methylation levels. The TREX-2 complex functions in docking export-competent ribonucleoprotein particles (mRNPs) to the nuclear entrance of the nuclear pore complex (nuclear basket). TREX-2 participates in mRNA export and accurate chromatin positioning in the nucleus by tethering genes to the nuclear periphery. May also be involved in cytoplasmic mRNA decay by interaction with components of P-bodies. This chain is Transcription and mRNA export factor SUS1, found in Saccharomyces cerevisiae (strain RM11-1a) (Baker's yeast).